A 349-amino-acid chain; its full sequence is Short chain dehydrogenase/reductase dpfgH (349 aa).

Residues 9–31 traverse the membrane as a helical segment; that stretch reads LCIRVVDSLYGSFLYLPLAILFL. Ile65, Arg89, and Asp115 together coordinate NADP(+). N-linked (GlcNAc...) asparagine glycosylation occurs at Asn118. 2 residues coordinate NADP(+): Asn142 and Lys164. Active-site proton donor residues include Ser191 and Ser192. Positions 223 and 227 each coordinate NADP(+). Tyr223 (proton acceptor) is an active-site residue. The Lowers pKa of active site Tyr role is filled by Lys227. A glycan (N-linked (GlcNAc...) asparagine) is linked at Asn334.

It belongs to the short-chain dehydrogenases/reductases (SDR) family.

The protein localises to the membrane. Its pathway is secondary metabolite biosynthesis; terpenoid biosynthesis. In terms of biological role, short chain dehydrogenase/reductase; part of the gene cluster that mediates the biosynthesis of diterpenoid pyrones. The first step of the pathway is the synthesis of the alpha-pyrone moiety by the polyketide synthase dpfgA via condensation of one acetyl-CoA starter unit with 3 malonyl-CoA units and 2 methylations. The alpha-pyrone is then combined with geranylgeranyl pyrophosphate (GGPP) formed by the GGPP synthase dpfgD through the action of the prenyltransferase dpfgC to yield a linear alpha-pyrone diterpenoid. Subsequent steps in the diterpenoid pyrone biosynthetic pathway involve the decalin core formation, which is initiated by the epoxidation of the C10-C11 olefin by the FAD-dependent oxidoreductase dpfgE, and is followed by a cyclization cascade catalyzed by the terpene cyclase dpfgB. The short chain dehydrogenase/reductase dpfgG then oxidizes the 8S hydroxy group to a ketone and the short chain dehydrogenase/reductase dpfgH reduces the ketone to the 8R hydroxy group to yield higginsianin B. Higginsianin B is further methylated by the methyltransferase dpfgI to produce the intermediate named FDDP B. The cytochrome P450 monooxygenase dfgpJ then catalyzes a three-step oxidation at C-27 to generate a carboxylic acid as well as C-26 hydroxylation. Finally, methyltransferase dpfgK methylates the carboxylic acid generated by dpfgJ, yielding the final diterpenoid pyrones from the pathway which were named FDDP D and FDDP E. This Gibberella zeae (strain ATCC MYA-4620 / CBS 123657 / FGSC 9075 / NRRL 31084 / PH-1) (Wheat head blight fungus) protein is Short chain dehydrogenase/reductase dpfgH.